The primary structure comprises 414 residues: Serine hydroxymethyltransferase (414 aa).

(6S)-5,6,7,8-tetrahydrofolate-binding positions include Leu-121 and 125 to 127 (GHL). The residue at position 229 (Lys-229) is an N6-(pyridoxal phosphate)lysine.

The protein belongs to the SHMT family. In terms of assembly, homodimer. It depends on pyridoxal 5'-phosphate as a cofactor.

It is found in the cytoplasm. The enzyme catalyses (6R)-5,10-methylene-5,6,7,8-tetrahydrofolate + glycine + H2O = (6S)-5,6,7,8-tetrahydrofolate + L-serine. The protein operates within one-carbon metabolism; tetrahydrofolate interconversion. It functions in the pathway amino-acid biosynthesis; glycine biosynthesis; glycine from L-serine: step 1/1. Its function is as follows. Catalyzes the reversible interconversion of serine and glycine with tetrahydrofolate (THF) serving as the one-carbon carrier. This reaction serves as the major source of one-carbon groups required for the biosynthesis of purines, thymidylate, methionine, and other important biomolecules. Also exhibits THF-independent aldolase activity toward beta-hydroxyamino acids, producing glycine and aldehydes, via a retro-aldol mechanism. The protein is Serine hydroxymethyltransferase of Herminiimonas arsenicoxydans.